The sequence spans 363 residues: Phosphoserine aminotransferase (363 aa).

An L-glutamate-binding site is contributed by R42. Pyridoxal 5'-phosphate is bound by residues 76–77 (GR), W102, T156, D175, and Q198. K199 is modified (N6-(pyridoxal phosphate)lysine). Residue 240–241 (NT) coordinates pyridoxal 5'-phosphate.

Belongs to the class-V pyridoxal-phosphate-dependent aminotransferase family. SerC subfamily. In terms of assembly, homodimer. Pyridoxal 5'-phosphate is required as a cofactor.

The protein resides in the cytoplasm. The enzyme catalyses O-phospho-L-serine + 2-oxoglutarate = 3-phosphooxypyruvate + L-glutamate. It catalyses the reaction 4-(phosphooxy)-L-threonine + 2-oxoglutarate = (R)-3-hydroxy-2-oxo-4-phosphooxybutanoate + L-glutamate. It functions in the pathway amino-acid biosynthesis; L-serine biosynthesis; L-serine from 3-phospho-D-glycerate: step 2/3. The protein operates within cofactor biosynthesis; pyridoxine 5'-phosphate biosynthesis; pyridoxine 5'-phosphate from D-erythrose 4-phosphate: step 3/5. Catalyzes the reversible conversion of 3-phosphohydroxypyruvate to phosphoserine and of 3-hydroxy-2-oxo-4-phosphonooxybutanoate to phosphohydroxythreonine. In Shewanella sp. (strain MR-7), this protein is Phosphoserine aminotransferase.